The primary structure comprises 389 residues: Tryptophan synthase beta chain (389 aa).

At lysine 84 the chain carries N6-(pyridoxal phosphate)lysine.

It belongs to the TrpB family. In terms of assembly, tetramer of two alpha and two beta chains. Pyridoxal 5'-phosphate serves as cofactor.

It carries out the reaction (1S,2R)-1-C-(indol-3-yl)glycerol 3-phosphate + L-serine = D-glyceraldehyde 3-phosphate + L-tryptophan + H2O. Its pathway is amino-acid biosynthesis; L-tryptophan biosynthesis; L-tryptophan from chorismate: step 5/5. In terms of biological role, the beta subunit is responsible for the synthesis of L-tryptophan from indole and L-serine. The protein is Tryptophan synthase beta chain of Clostridium novyi (strain NT).